The primary structure comprises 407 residues: Imidazolonepropionase (407 aa).

Fe(3+) contacts are provided by His-68 and His-70. 2 residues coordinate Zn(2+): His-68 and His-70. 4-imidazolone-5-propanoate contacts are provided by Arg-77, Tyr-140, and His-173. Tyr-140 provides a ligand contact to N-formimidoyl-L-glutamate. Residue His-238 coordinates Fe(3+). His-238 contributes to the Zn(2+) binding site. 4-imidazolone-5-propanoate is bound at residue Gln-241. Residue Asp-313 participates in Fe(3+) binding. Asp-313 is a Zn(2+) binding site. The N-formimidoyl-L-glutamate site is built by Asn-315 and Gly-317. Thr-318 contacts 4-imidazolone-5-propanoate.

This sequence belongs to the metallo-dependent hydrolases superfamily. HutI family. Zn(2+) serves as cofactor. Fe(3+) is required as a cofactor.

It localises to the cytoplasm. It catalyses the reaction 4-imidazolone-5-propanoate + H2O = N-formimidoyl-L-glutamate. Its pathway is amino-acid degradation; L-histidine degradation into L-glutamate; N-formimidoyl-L-glutamate from L-histidine: step 3/3. Functionally, catalyzes the hydrolytic cleavage of the carbon-nitrogen bond in imidazolone-5-propanoate to yield N-formimidoyl-L-glutamate. It is the third step in the universal histidine degradation pathway. The polypeptide is Imidazolonepropionase (Burkholderia orbicola (strain MC0-3)).